A 545-amino-acid polypeptide reads, in one-letter code: MVTIVLNKYKLLDKIHIGQQKLEDLLFNLKSEVKPIDENNIEIEINADRLDLLSSDGIARAIKGLLEKELGEAKYNVTDTEYTLIVDNVRTRPYALAAVVYNAKIDLEELIQFQEKLHGTIGRKRKKVAIGIHDLRKVDSKTIEYKEVPLSYKFVPLYENKELTISEILEKTEQGKLYGNISIANGVSPAIVQDDGEVLSIPPIINSNKTRLDENTKDFFIDVTGTSFEAVAQTLDIIVSNLAEAGGTIGRVKVLKSANFSQLSSPLFLHKIQNVREEYVKKILGIKTSKEEICKHVMRMRMNCDIENGVIRVTVPQYRVDILNEIDVVEDIAMSIGYNNLEPSKYISTNYGSYDYMTLLERKIRELGIGAGYVEISNFVLIKDEKLFSNKYVKILNPVTDEYNAVRNSLIPGLLDFLSKNQHAKFPIRVFETGDVVVYDSSTDTGFRNDKRAAYAIMDNKVSYEDIQAPIHYILKSLGLEVNYKEENNNIFIEGRSASIFYENEKMGVIGEVNPDVLIRFGIEYPAVIAELYISEIAKRLTNQR.

Residues 268–343 (FLHKIQNVRE…MSIGYNNLEP (76 aa)) form the B5 domain. Asp321, Asp327, Glu330, and Asp331 together coordinate Mg(2+).

It belongs to the phenylalanyl-tRNA synthetase beta subunit family. Type 2 subfamily. Tetramer of two alpha and two beta subunits. Mg(2+) serves as cofactor.

It localises to the cytoplasm. The enzyme catalyses tRNA(Phe) + L-phenylalanine + ATP = L-phenylalanyl-tRNA(Phe) + AMP + diphosphate + H(+). In Saccharolobus islandicus (strain M.14.25 / Kamchatka #1) (Sulfolobus islandicus), this protein is Phenylalanine--tRNA ligase beta subunit.